Here is a 425-residue protein sequence, read N- to C-terminus: UDP-N-acetylglucosamine 1-carboxyvinyltransferase (425 aa).

23–24 contributes to the phosphoenolpyruvate binding site; sequence KN. Arginine 100 provides a ligand contact to UDP-N-acetyl-alpha-D-glucosamine. Cysteine 124 serves as the catalytic Proton donor. Residue cysteine 124 is modified to 2-(S-cysteinyl)pyruvic acid O-phosphothioketal. Aspartate 313 and isoleucine 335 together coordinate UDP-N-acetyl-alpha-D-glucosamine.

The protein belongs to the EPSP synthase family. MurA subfamily.

The protein localises to the cytoplasm. It carries out the reaction phosphoenolpyruvate + UDP-N-acetyl-alpha-D-glucosamine = UDP-N-acetyl-3-O-(1-carboxyvinyl)-alpha-D-glucosamine + phosphate. It participates in cell wall biogenesis; peptidoglycan biosynthesis. In terms of biological role, cell wall formation. Adds enolpyruvyl to UDP-N-acetylglucosamine. The polypeptide is UDP-N-acetylglucosamine 1-carboxyvinyltransferase (Wolbachia sp. subsp. Brugia malayi (strain TRS)).